Consider the following 123-residue polypeptide: Late histone H2B.L3 (123 aa).

A compositionally biased stretch (low complexity) spans 1–10; sequence MPAKAQAAGK. Positions 1-32 are disordered; the sequence is MPAKAQAAGKKGSKKAKAPKPSGDKKRRRKRK. Ser110 is a glycosylation site (O-linked (GlcNAc) serine). Lys118 participates in a covalent cross-link: Glycyl lysine isopeptide (Lys-Gly) (interchain with G-Cter in ubiquitin).

It belongs to the histone H2B family. In terms of assembly, the nucleosome is a histone octamer containing two molecules each of H2A, H2B, H3 and H4 assembled in one H3-H4 heterotetramer and two H2A-H2B heterodimers. The octamer wraps approximately 147 bp of DNA. Post-translationally, monoubiquitination of Lys-118 gives a specific tag for epigenetic transcriptional activation and is also prerequisite for histone H3 'Lys-4' and 'Lys-79' methylation. In terms of processing, glcNAcylation at Ser-110 promotes monoubiquitination of Lys-118. It fluctuates in response to extracellular glucose, and associates with transcribed genes.

The protein resides in the nucleus. It localises to the chromosome. In terms of biological role, core component of nucleosome. Nucleosomes wrap and compact DNA into chromatin, limiting DNA accessibility to the cellular machineries which require DNA as a template. Histones thereby play a central role in transcription regulation, DNA repair, DNA replication and chromosomal stability. DNA accessibility is regulated via a complex set of post-translational modifications of histones, also called histone code, and nucleosome remodeling. This Strongylocentrotus purpuratus (Purple sea urchin) protein is Late histone H2B.L3.